A 1181-amino-acid chain; its full sequence is Integrin alpha-2 (1181 aa).

A signal peptide spans 1–29; the sequence is MGPERTGAAPLPLLLVLALSQGILNCCLA. Over 30 to 1132 the chain is Extracellular; it reads YNVGLPEAKI…KPDEKAEVPT (1103 aa). FG-GAP repeat units follow at residues 34–92 and 101–161; these read LPEA…TATC and TSIP…LSAS. A disulfide bridge connects residues Cys-83 and Cys-92. N-linked (GlcNAc...) asparagine glycans are attached at residues Asn-105, Asn-112, and Asn-343. One can recognise a VWFA domain in the interval 188-365; sequence WDAVKNFLEK…TLGEQIFSIE (178 aa). FG-GAP repeat units lie at residues 366–420, 423–475, 477–539, 540–598, and 602–664; these read GTVQ…LIFP, AFDQ…ENGN, TVIQ…ILGQ, HQFL…TIRT, and QKIL…FTPE. Residues Asn-432, Asn-460, and Asn-475 are each glycosylated (N-linked (GlcNAc...) asparagine). Ca(2+) contacts are provided by Asp-499, Asp-501, Asp-503, Asp-507, Asp-563, Asn-565, Asp-567, Asp-571, Asp-627, Asn-629, Asp-631, and Asp-635. Disulfide bonds link Cys-680-Cys-737, Cys-789-Cys-795, Cys-865-Cys-876, Cys-1019-Cys-1050, and Cys-1055-Cys-1060. An N-linked (GlcNAc...) asparagine glycan is attached at Asn-699. N-linked (GlcNAc...) asparagine glycosylation is found at Asn-1057, Asn-1074, and Asn-1081. A helical transmembrane segment spans residues 1133 to 1154; sequence GVIIGSIIAGILLLLALVAILW. Positions 1155 to 1161 are interaction with HPS5; the sequence is KLGFFKR. The Cytoplasmic segment spans residues 1155-1181; the sequence is KLGFFKRKYEKMTKNPDEIDETTELSS. Residues 1157–1161 carry the GFFKR motif motif; the sequence is GFFKR.

It belongs to the integrin alpha chain family. Heterodimer of an alpha and a beta subunit. Alpha-2 associates with beta-1. Interacts with HPS5 and RAB21. In terms of assembly, (Microbial infection) Integrin ITGA2:ITGB1 interacts (via ITAG2 I-domain) with rotavirus A VP4 protein. As to quaternary structure, (Microbial infection) Integrin ITGA2:ITGB1 interacts with human echoviruses 1 and 8 capsid proteins.

The protein localises to the membrane. In terms of biological role, integrin alpha-2/beta-1 is a receptor for laminin, collagen, collagen C-propeptides, fibronectin and E-cadherin. It recognizes the proline-hydroxylated sequence G-F-P-G-E-R in collagen. It is responsible for adhesion of platelets and other cells to collagens, modulation of collagen and collagenase gene expression, force generation and organization of newly synthesized extracellular matrix. (Microbial infection) Integrin ITGA2:ITGB1 acts as a receptor for Human rotavirus A. Its function is as follows. (Microbial infection) Integrin ITGA2:ITGB1 acts as a receptor for Human echoviruses 1 and 8. The protein is Integrin alpha-2 (ITGA2) of Homo sapiens (Human).